Consider the following 130-residue polypeptide: Phosphoribosyl-AMP cyclohydrolase (130 aa).

Residue Asp77 coordinates Mg(2+). Cys78 serves as a coordination point for Zn(2+). The Mg(2+) site is built by Asp79 and Asp81. Zn(2+) is bound by residues Cys95 and Cys102.

The protein belongs to the PRA-CH family. As to quaternary structure, homodimer. The cofactor is Mg(2+). Zn(2+) is required as a cofactor.

The protein localises to the cytoplasm. It catalyses the reaction 1-(5-phospho-beta-D-ribosyl)-5'-AMP + H2O = 1-(5-phospho-beta-D-ribosyl)-5-[(5-phospho-beta-D-ribosylamino)methylideneamino]imidazole-4-carboxamide. It functions in the pathway amino-acid biosynthesis; L-histidine biosynthesis; L-histidine from 5-phospho-alpha-D-ribose 1-diphosphate: step 3/9. In terms of biological role, catalyzes the hydrolysis of the adenine ring of phosphoribosyl-AMP. In Pseudomonas putida (strain W619), this protein is Phosphoribosyl-AMP cyclohydrolase.